We begin with the raw amino-acid sequence, 111 residues long: Large ribosomal subunit protein uL23 (111 aa).

It belongs to the universal ribosomal protein uL23 family. As to quaternary structure, part of the 50S ribosomal subunit. Contacts protein L29, and trigger factor when it is bound to the ribosome.

One of the early assembly proteins it binds 23S rRNA. One of the proteins that surrounds the polypeptide exit tunnel on the outside of the ribosome. Forms the main docking site for trigger factor binding to the ribosome. In Chlamydia trachomatis serovar L2 (strain ATCC VR-902B / DSM 19102 / 434/Bu), this protein is Large ribosomal subunit protein uL23.